The sequence spans 255 residues: 3-dehydroquinate dehydratase (255 aa).

3-dehydroquinate-binding positions include 47–49 (EWR) and Arg-83. The Proton donor/acceptor role is filled by His-144. Lys-171 acts as the Schiff-base intermediate with substrate in catalysis. 3-dehydroquinate-binding residues include Arg-214, Ser-233, and Gln-237.

It belongs to the type-I 3-dehydroquinase family. As to quaternary structure, homodimer.

The enzyme catalyses 3-dehydroquinate = 3-dehydroshikimate + H2O. It participates in metabolic intermediate biosynthesis; chorismate biosynthesis; chorismate from D-erythrose 4-phosphate and phosphoenolpyruvate: step 3/7. Its function is as follows. Involved in the third step of the chorismate pathway, which leads to the biosynthesis of aromatic amino acids. Catalyzes the cis-dehydration of 3-dehydroquinate (DHQ) and introduces the first double bond of the aromatic ring to yield 3-dehydroshikimate. This Alkaliphilus oremlandii (strain OhILAs) (Clostridium oremlandii (strain OhILAs)) protein is 3-dehydroquinate dehydratase.